We begin with the raw amino-acid sequence, 411 residues long: UPF0754 membrane protein Npun_R4433 (411 aa).

2 consecutive transmembrane segments (helical) span residues 3 to 23 (WSHLWLYVSPPVLGGIIGYFT) and 387 to 407 (IVTLGGVLGFVIGLLQTVFLV).

The protein belongs to the UPF0754 family.

The protein resides in the cell inner membrane. This chain is UPF0754 membrane protein Npun_R4433, found in Nostoc punctiforme (strain ATCC 29133 / PCC 73102).